Reading from the N-terminus, the 544-residue chain is CTP synthase (544 aa).

Residues 1-265 are amidoligase domain; the sequence is MARFIFITGG…DEAVLSAFGI (265 aa). Residue S13 participates in CTP binding. S13 is a UTP binding site. Position 14-19 (14-19) interacts with ATP; sequence SLGKGL. Y54 lines the L-glutamine pocket. Residue D71 coordinates ATP. Mg(2+) is bound by residues D71 and E139. Residues 146 to 148, 186 to 191, and K222 contribute to the CTP site; these read DIE and KTKPTQ. UTP is bound by residues 186–191 and K222; that span reads KTKPTQ. Positions 291–543 constitute a Glutamine amidotransferase type-1 domain; the sequence is TIGVVGKYVG…IAAALQQSRL (253 aa). G355 provides a ligand contact to L-glutamine. Residue C382 is the Nucleophile; for glutamine hydrolysis of the active site. Residues 383–386, E406, and R471 each bind L-glutamine; that span reads LGMQ. Residues H516 and E518 contribute to the active site.

Belongs to the CTP synthase family. In terms of assembly, homotetramer.

The enzyme catalyses UTP + L-glutamine + ATP + H2O = CTP + L-glutamate + ADP + phosphate + 2 H(+). It carries out the reaction L-glutamine + H2O = L-glutamate + NH4(+). It catalyses the reaction UTP + NH4(+) + ATP = CTP + ADP + phosphate + 2 H(+). The protein operates within pyrimidine metabolism; CTP biosynthesis via de novo pathway; CTP from UDP: step 2/2. Allosterically activated by GTP, when glutamine is the substrate; GTP has no effect on the reaction when ammonia is the substrate. The allosteric effector GTP functions by stabilizing the protein conformation that binds the tetrahedral intermediate(s) formed during glutamine hydrolysis. Inhibited by the product CTP, via allosteric rather than competitive inhibition. Its function is as follows. Catalyzes the ATP-dependent amination of UTP to CTP with either L-glutamine or ammonia as the source of nitrogen. Regulates intracellular CTP levels through interactions with the four ribonucleotide triphosphates. The sequence is that of CTP synthase from Rhizorhabdus wittichii (strain DSM 6014 / CCUG 31198 / JCM 15750 / NBRC 105917 / EY 4224 / RW1) (Sphingomonas wittichii).